Consider the following 208-residue polypeptide: Large ribosomal subunit protein uL4 (208 aa).

The tract at residues 44-89 (RRQGTHKAKNRSEVRGGGRKPYRQKGTGHARQGSTRSPLMTGGGTI) is disordered. Positions 60–71 (GGRKPYRQKGTG) are enriched in basic residues.

Belongs to the universal ribosomal protein uL4 family. As to quaternary structure, part of the 50S ribosomal subunit.

Its function is as follows. One of the primary rRNA binding proteins, this protein initially binds near the 5'-end of the 23S rRNA. It is important during the early stages of 50S assembly. It makes multiple contacts with different domains of the 23S rRNA in the assembled 50S subunit and ribosome. Functionally, forms part of the polypeptide exit tunnel. This chain is Large ribosomal subunit protein uL4, found in Chlorobium phaeobacteroides (strain BS1).